Consider the following 254-residue polypeptide: tRNA (guanine-N(1)-)-methyltransferase (254 aa).

S-adenosyl-L-methionine is bound by residues G121 and 141-146 (LGDYVL).

Belongs to the RNA methyltransferase TrmD family. As to quaternary structure, homodimer.

The protein localises to the cytoplasm. The catalysed reaction is guanosine(37) in tRNA + S-adenosyl-L-methionine = N(1)-methylguanosine(37) in tRNA + S-adenosyl-L-homocysteine + H(+). Specifically methylates guanosine-37 in various tRNAs. This Psychrobacter cryohalolentis (strain ATCC BAA-1226 / DSM 17306 / VKM B-2378 / K5) protein is tRNA (guanine-N(1)-)-methyltransferase.